A 556-amino-acid chain; its full sequence is Formate--tetrahydrofolate ligase (556 aa).

ATP is bound at residue 65 to 72 (TPAGEGKS).

This sequence belongs to the formate--tetrahydrofolate ligase family.

It catalyses the reaction (6S)-5,6,7,8-tetrahydrofolate + formate + ATP = (6R)-10-formyltetrahydrofolate + ADP + phosphate. Its pathway is one-carbon metabolism; tetrahydrofolate interconversion. This Streptococcus equi subsp. zooepidemicus (strain H70) protein is Formate--tetrahydrofolate ligase.